The chain runs to 155 residues: MASEELFEAEFSEEQDLEHQQAMETEEAELAETEEPLEITEESPDNPEAESTTEQLTEKPVTNGNKAPADNEAKMTQLPLARIRNIMKLDPDLHMANNEAVFIVAKAVELFIASLSRESYTYTAQSKKKTIQKRDVDMAISAVDSLLFLDGAMNF.

Composition is skewed to acidic residues over residues 1 to 16 (MASE…EEQD) and 24 to 48 (ETEE…DNPE). The disordered stretch occupies residues 1–76 (MASEELFEAE…APADNEAKMT (76 aa)). The segment covering 49-65 (AESTTEQLTEKPVTNGN) has biased composition (polar residues).

In terms of assembly, component of the DNA polymerase epsilon complex consisting of four subunits: the catalytic subunit PolE1/DNApol-epsilon255 and the accessory subunits PolE2/DNApol-epsilon58, Chrac-14/DNApolE3 and PolE4/Mes4.

Its subcellular location is the nucleus. Its function is as follows. Accessory component of the DNA polymerase epsilon complex. Participates in DNA repair and in chromosomal DNA replication. Has a role in cell cycle progression. Required for wing morphogenesis. This Drosophila melanogaster (Fruit fly) protein is DNA polymerase epsilon subunit 4.